The primary structure comprises 372 residues: Oxoglutarate-dependent flavonoid 7-O-demethylase 1 (372 aa).

Residues 221-321 (GIQALRMNYY…RLSVAAFLNP (101 aa)) form the Fe2OG dioxygenase domain. Residues His245, Asp247, and His302 each contribute to the Fe cation site. Arg312 is a binding site for 2-oxoglutarate.

The protein belongs to the iron/ascorbate-dependent oxidoreductase family. Monomer. Fe(2+) is required as a cofactor. The cofactor is L-ascorbate. Accumulates in the trichomes of nevadensin-accumulating strains (e.g. cv. SD and cv. EMX-1) and in cv. SW (at protein level) but not in cv. MC.

It localises to the cytoplasm. The catalysed reaction is gardenin B + 2-oxoglutarate + O2 = nevadensin + formaldehyde + succinate + CO2 + H(+). It carries out the reaction 8-hydroxysalvigenin + 2-oxoglutarate + O2 = pilosin + formaldehyde + succinate + CO2. Its pathway is flavonoid metabolism. Its activity is regulated as follows. Inhibited by prohexadione-calcium, a 2-oxoglutarate-dependent dioxygenase (2-ODD) inhibitor, thus leading to a decreased abundance of nevadensin (NEV) and absence of pilosin (PIL) production, but to the accumulation of gardenin B (GARD B) and 8-hydroxysalvigenin (8-OH-SALV). Oxoglutarate-dependent dioxygenase (2-ODD) acting as a flavonoid 7-O-demethylase involved in the biosynthesis of polymethoxylated flavonoids natural products such as nevadensin and salvigenin, aroma compounds which contribute to the flavor of sweet basil, and exhibit pharmacological activities such as anti-allergic, anti-oxidant, antibacterial, anti-proliferative, and anti-inflammatory effects. Catalyzes the 7-O-demethylation of methoxylated flavones; mediates the conversion of 8-hydroxysalvigenin (8-OH-SALV) to pilosin (PIL) and of gardenin B (GARD B) to nevadensin (NEV). The protein is Oxoglutarate-dependent flavonoid 7-O-demethylase 1 of Ocimum basilicum (Sweet basil).